The chain runs to 308 residues: Transaldolase (308 aa).

K125 (schiff-base intermediate with substrate) is an active-site residue.

This sequence belongs to the transaldolase family. Type 1 subfamily. As to quaternary structure, homodimer.

The protein resides in the cytoplasm. The enzyme catalyses D-sedoheptulose 7-phosphate + D-glyceraldehyde 3-phosphate = D-erythrose 4-phosphate + beta-D-fructose 6-phosphate. Its pathway is carbohydrate degradation; pentose phosphate pathway; D-glyceraldehyde 3-phosphate and beta-D-fructose 6-phosphate from D-ribose 5-phosphate and D-xylulose 5-phosphate (non-oxidative stage): step 2/3. Transaldolase is important for the balance of metabolites in the pentose-phosphate pathway. The polypeptide is Transaldolase (Pseudomonas fluorescens (strain ATCC BAA-477 / NRRL B-23932 / Pf-5)).